We begin with the raw amino-acid sequence, 492 residues long: FAD-linked oxidoreductase pgmH (492 aa).

An FAD-binding PCMH-type domain is found at 54–224 (SIRLATLVVY…TEFKYRVHKQ (171 aa)).

Belongs to the oxygen-dependent FAD-linked oxidoreductase family. It depends on FAD as a cofactor.

Its pathway is pigment biosynthesis. The protein operates within secondary metabolite biosynthesis. Its function is as follows. FAD-linked oxidoreductase; part of the gene cluster that mediates the biosynthesis of pleosporalin A, ascomycone A, as well as a third cryptic naphthoquinone derived pigment, all responsible for the coloration of conidia. Essential for the production of pleosporalin A, but not the 2 other final products. The pathway begins with the biosynthesis of the cyclized heptaketide 3-acetonyl-1,6,8-trihydroxy-2-naphthaldehyde by the NR-PKS pgmA. The C-6 hydroxyl group is further methylated by the O-methyltransferase pgmB to yield fusarubinaldehyde which is in turn oxidized by the cytochrome P450 monooxygenase pgmC at C-9. The C-1 hydroxyl group is then methylated spontaneously. Although pgmE, pgmD and pgmH are essential for the production of pleosporalin A, it is not the case for the 2 other final products and it remains difficult to assign a specific function to each enzyme. PgmF and pgmG seem not to be involved in pigment biosynthesis although they were regulated by the cluster-specific transcription factor pgmR. This Aspergillus terreus protein is FAD-linked oxidoreductase pgmH.